We begin with the raw amino-acid sequence, 572 residues long: Excitatory amino acid transporter 2 (572 aa).

A compositionally biased stretch (polar residues) spans 1–11 (MASTEGANNMP). Positions 1-28 (MASTEGANNMPKQVEVRMHDSHLSSDEP) are disordered. Residues 1–44 (MASTEGANNMPKQVEVRMHDSHLSSDEPKHRNLGMRMCDKLGKN) are Cytoplasmic-facing. Residues Ser3, Ser21, Ser24, and Ser25 each carry the phosphoserine modification. Over residues 14 to 28 (VEVRMHDSHLSSDEP) the composition is skewed to basic and acidic residues. Cys38 carries the S-palmitoyl cysteine lipid modification. Transmembrane regions (helical) follow at residues 45–64 (LLLS…GGLL), 88–108 (MLKM…LSGL), and 121–142 (MVYY…VLAI). N-linked (GlcNAc...) asparagine glycans are attached at residues Asn205 and Asn215. A run of 3 helical transmembrane segments spans residues 235–258 (FKDG…MGKM), 268–295 (FFNI…ACLI), and 317–338 (ITVI…YFVV). The segment at residues 344–374 (FSFFAGIFQAWITALGTASSAGTLPVTFRCL) is an intramembrane region (discontinuously helical). 361–363 (ASS) contacts L-aspartate. Residues 384 to 410 (VTRFVLPVGATINMDGTALYEAVAAIF) form a helical membrane-spanning segment. Residues Gly392, Thr394, and Asn396 each coordinate Na(+). L-aspartate is bound by residues Thr400, 441–445 (IPSAG), Asp474, and Asn481. Positions 424-457 (IVTVSLTATLASIGAASIPSAGLVTMLLILTAVG) form an intramembrane region, discontinuously helical. Residues 471-492 (WLLDRMRTSVNVVGDSFGAGIV) form a helical membrane-spanning segment. Residues Asn481 and Asp485 each contribute to the Na(+) site. Ser505, Ser520, Ser530, and Ser532 each carry phosphoserine. Tyr537 is modified (phosphotyrosine). Phosphoserine is present on residues Ser542, Ser558, and Ser562.

It belongs to the dicarboxylate/amino acid:cation symporter (DAACS) (TC 2.A.23) family. SLC1A2 subfamily. In terms of assembly, homotrimer. Interacts with AJUBA. In terms of processing, glycosylated. Palmitoylation at Cys-38 is not required for correct subcellular localization, but is important for glutamate uptake activity. Detected in brain. Detected in embryonic forebrain, especially in globus pallidus, perirhinal cortex, lateral hypothalamus, hippocampus, and on fimbria and axonal pathways connecting the neocortex, basal ganglia and thalamus (at protein level). Isoform GLT1 is expressed in the brain. Isoforms GLT-1A and GLT-1B are expressed in the liver.

It localises to the cell membrane. The enzyme catalyses K(+)(in) + L-glutamate(out) + 3 Na(+)(out) + H(+)(out) = K(+)(out) + L-glutamate(in) + 3 Na(+)(in) + H(+)(in). It carries out the reaction K(+)(in) + L-aspartate(out) + 3 Na(+)(out) + H(+)(out) = K(+)(out) + L-aspartate(in) + 3 Na(+)(in) + H(+)(in). The catalysed reaction is D-aspartate(out) + K(+)(in) + 3 Na(+)(out) + H(+)(out) = D-aspartate(in) + K(+)(out) + 3 Na(+)(in) + H(+)(in). Functionally, sodium-dependent, high-affinity amino acid transporter that mediates the uptake of L-glutamate and also L-aspartate and D-aspartate. Functions as a symporter that transports one amino acid molecule together with two or three Na(+) ions and one proton, in parallel with the counter-transport of one K(+) ion. Mediates Cl(-) flux that is not coupled to amino acid transport; this avoids the accumulation of negative charges due to aspartate and Na(+) symport. Essential for the rapid removal of released glutamate from the synaptic cleft, and for terminating the postsynaptic action of glutamate. This chain is Excitatory amino acid transporter 2 (Slc1a2), found in Mus musculus (Mouse).